A 375-amino-acid chain; its full sequence is Chaperone protein DnaJ (375 aa).

One can recognise a J domain in the interval 5–70 (DYYEVLGVER…GKRMAYDQYG (66 aa)). Residues 134–212 (GTTVTIRVPT…CHGQGRVEEH (79 aa)) form a CR-type zinc finger. Residues Cys147, Cys150, Cys164, Cys167, Cys186, Cys189, Cys200, and Cys203 each coordinate Zn(2+). CXXCXGXG motif repeat units follow at residues 147–154 (CKTCDGSG), 164–171 (CTTCGGIG), 186–193 (CPRCHGSG), and 200–207 (CPDCHGQG).

Belongs to the DnaJ family. As to quaternary structure, homodimer. Zn(2+) serves as cofactor.

It localises to the cytoplasm. Its function is as follows. Participates actively in the response to hyperosmotic and heat shock by preventing the aggregation of stress-denatured proteins and by disaggregating proteins, also in an autonomous, DnaK-independent fashion. Unfolded proteins bind initially to DnaJ; upon interaction with the DnaJ-bound protein, DnaK hydrolyzes its bound ATP, resulting in the formation of a stable complex. GrpE releases ADP from DnaK; ATP binding to DnaK triggers the release of the substrate protein, thus completing the reaction cycle. Several rounds of ATP-dependent interactions between DnaJ, DnaK and GrpE are required for fully efficient folding. Also involved, together with DnaK and GrpE, in the DNA replication of plasmids through activation of initiation proteins. In Azotobacter vinelandii (strain DJ / ATCC BAA-1303), this protein is Chaperone protein DnaJ.